The primary structure comprises 250 residues: Ribosomal RNA small subunit methyltransferase J (250 aa).

S-adenosyl-L-methionine contacts are provided by residues 101–102 (RD), 117–118 (ER), 153–154 (SS), and Asp-171.

The protein belongs to the methyltransferase superfamily. RsmJ family.

The protein resides in the cytoplasm. The catalysed reaction is guanosine(1516) in 16S rRNA + S-adenosyl-L-methionine = N(2)-methylguanosine(1516) in 16S rRNA + S-adenosyl-L-homocysteine + H(+). Specifically methylates the guanosine in position 1516 of 16S rRNA. The polypeptide is Ribosomal RNA small subunit methyltransferase J (Escherichia fergusonii (strain ATCC 35469 / DSM 13698 / CCUG 18766 / IAM 14443 / JCM 21226 / LMG 7866 / NBRC 102419 / NCTC 12128 / CDC 0568-73)).